Here is a 279-residue protein sequence, read N- to C-terminus: Tetra-spanning protein 1 (279 aa).

A run of 2 helical transmembrane segments spans residues 25–45 and 50–70; these read VWFS…LQAI and APPF…AIVL. N77 is a glycosylation site (N-linked (GlcNAc...) asparagine). Residues 100 to 122 traverse the membrane as a helical segment; the sequence is YFILALSMLIDRPILFSLAPYAI. N143 is a glycosylation site (N-linked (GlcNAc...) asparagine). The helical transmembrane segment at 172–192 threads the bilayer; that stretch reads MQLVASLETFLLFRLFFGVFL. Residues 260-279 form a disordered region; the sequence is VGTAQSRPTASSSTTAPSST. Positions 262–279 are enriched in low complexity; it reads TAQSRPTASSSTTAPSST.

It belongs to the PER33/POM33 family. Interacts with RTN1 and YOP1.

The protein resides in the golgi apparatus membrane. It localises to the endoplasmic reticulum membrane. It is found in the nucleus membrane. Functionally, required for the correct positioning of the cellular division plane by delimiting the actomyosin ring assembly at the cell equator. The polypeptide is Tetra-spanning protein 1 (tts1) (Schizosaccharomyces pombe (strain 972 / ATCC 24843) (Fission yeast)).